The chain runs to 218 residues: Dehydration-responsive element-binding protein 1B (218 aa).

The disordered stretch occupies residues 1–26 (MEVEEAAYRTVWSEPPKRPAGRTKFR). A DNA-binding region (AP2/ERF) is located at residues 32–95 (VYRGVRRRGG…RGRAACLNFA (64 aa)). The segment at 131-151 (SAAPSSPAETFANDGDEEEDN) is disordered.

The protein belongs to the AP2/ERF transcription factor family. ERF subfamily.

The protein localises to the nucleus. Transcriptional activator that binds specifically to the DNA sequence 5'-[AG]CCGAC-3'. Binding to the C-repeat/DRE element mediates high salinity- and dehydration-inducible transcription. Confers resistance to high salt, cold and drought stress. In Oryza sativa subsp. japonica (Rice), this protein is Dehydration-responsive element-binding protein 1B (DREB1B).